A 114-amino-acid chain; its full sequence is Iron-sulfur cluster insertion protein ErpA (114 aa).

Residues cysteine 42, cysteine 106, and cysteine 108 each coordinate iron-sulfur cluster.

The protein belongs to the HesB/IscA family. As to quaternary structure, homodimer. Requires iron-sulfur cluster as cofactor.

Functionally, required for insertion of 4Fe-4S clusters for at least IspG. This is Iron-sulfur cluster insertion protein ErpA from Buchnera aphidicola subsp. Acyrthosiphon pisum (strain 5A).